The chain runs to 514 residues: Uridylate cyclase (514 aa).

2 Guanylate cyclase domains span residues 49–190 and 286–428; these read VHMY…AKLA and VSLY…EKRQ. A ribonucleoside 5'-triphosphate is bound by residues tyrosine 52, arginine 105, phenylalanine 178, 184-188, and 291-296; these read NHAAK and DIDGFT. Residues aspartate 291, isoleucine 292, and aspartate 339 each contribute to the Ca(2+) site. Aspartate 291 is a Mn(2+) binding site. Positions 495–514 are disordered; the sequence is IRADERQVQPHSRQKVDGSR. Positions 496–514 are enriched in basic and acidic residues; that stretch reads RADERQVQPHSRQKVDGSR.

The protein belongs to the adenylyl cyclase class-4/guanylyl cyclase family. Pyrimidine cyclase subfamily. As to quaternary structure, monomer. A divalent metal cation serves as cofactor.

The protein localises to the cytoplasm. The catalysed reaction is UTP = 3',5'-cyclic UMP + diphosphate. In terms of biological role, pycsar (pyrimidine cyclase system for antiphage resistance) provides immunity against bacteriophage. The pyrimidine cyclase (PycC) synthesizes cyclic nucleotides in response to infection; these serve as specific second messenger signals. The signals activate the adjacent effector, leading to bacterial cell death and abortive phage infection. A clade A Pycsar system. The pyrimidine cyclase gene of a two-gene Pycsar system, generates cyclic UMP (cUMP) from UTP, has little to no activity on ATP, CTP or GTP. Expression of this and adjacent effector PaPycTIR (AC P0DV41) probably confers resistance to bacteriophage. The genes are probably only expressed in response to bacteriophage infection. Does not have adenylyl or guanylyl cyclase activity. In Pseudomonas aeruginosa, this protein is Uridylate cyclase.